A 422-amino-acid polypeptide reads, in one-letter code: MMCSLVPSEQSSGTSLLPKDNAPFSWSSLDEDELDDSLLELSDGEDDGHFSFTEEQIQELLKDDDLSNEHFPWGGGLPSDDSRNVEKGEKGSQIPLDTPQEKDSPYNMGPEAETPDTFKLPQLTTSVGHGPTPAKSLNRRFALEKNLIKVTVAPFDPTVCDVALDKDKTYVSEVTSRVTEKPSSLGEEMREDDLSPNESTLCTESEGISPDNSASDGPPLPSSNSNFQHTVSDKNMSDSKKATPVFSQILDHSETPNTGSSRRNGSYKSSFEMKLPVSSSSSKDVLDKDSGKLKVHEKRLGKVIPVLQAKTRTNVPTFSPSDLEKQKQSYLRNVIAHIEDPVDSNQGTLGELCALMDQVHHMHNQKWQHPSDLTRRNYARFRQKSLQRYSLTQWVDRNKRSHHRFQRLPDFPYGPFVSSHQQ.

Disordered regions lie at residues 1–28 (MMCS…SWSS), 61–135 (LKDD…TPAK), and 170–292 (YVSE…DSGK). Basic and acidic residues predominate over residues 80–90 (DDSRNVEKGEK). Ser195 carries the phosphoserine modification. Positions 231–241 (VSDKNMSDSKK) are enriched in basic and acidic residues. Polar residues predominate over residues 255–269 (TPNTGSSRRNGSYKS). Residues 274–283 (KLPVSSSSSK) are compositionally biased toward low complexity.

Interacts with S100P.

It is found in the nucleus. The chain is S100P-binding protein from Bos taurus (Bovine).